The chain runs to 205 residues: Beta-crystallin B2 (205 aa).

An N-acetylalanine modification is found at alanine 2. The interval 2-16 (ASDHQTQAGKPQSLN) is N-terminal arm. 2 Beta/gamma crystallin 'Greek key' domains span residues 17–56 (PKII…LVQA) and 57–101 (GPWV…RPIK). Residues 102–106 (VDSQE) are connecting peptide. 2 consecutive Beta/gamma crystallin 'Greek key' domains span residues 107–148 (HKII…RVQS) and 149–191 (GTWV…RRIR). Residues 193 to 205 (MQWHQRGAFHPSN) are C-terminal arm.

The protein belongs to the beta/gamma-crystallin family. In terms of assembly, homo/heterodimer, or complexes of higher-order. The structure of beta-crystallin oligomers seems to be stabilized through interactions between the N-terminal arms.

Crystallins are the dominant structural components of the vertebrate eye lens. The sequence is that of Beta-crystallin B2 (CRYBB2) from Homo sapiens (Human).